A 318-amino-acid polypeptide reads, in one-letter code: Sucrose operon repressor (318 aa).

The HTH lacI-type domain occupies 1 to 56 (MIKLEDVANKAGVSVTTVSRVINRKGYLSDATISKVEKAMQDLHYIPNAAARSLQG). A DNA-binding region (H-T-H motif) is located at residues 4 to 23 (LEDVANKAGVSVTTVSRVIN).

This protein may control the expression of the genes that are involved in the transport and catabolism of sucrose. The sequence is that of Sucrose operon repressor (sacR) from Lactococcus lactis subsp. lactis (Streptococcus lactis).